The following is a 109-amino-acid chain: B melanoma antigen 3 (109 aa).

Positions 1–17 (MAAGVVFLALSAQLLQA) are cleaved as a signal peptide.

It belongs to the BAGE family. As to expression, not expressed in normal tissues except in testis. Expressed in melanoma, bladder and lung carcinomas.

The protein localises to the secreted. Unknown. Candidate gene encoding tumor antigens. The polypeptide is B melanoma antigen 3 (BAGE3) (Homo sapiens (Human)).